A 194-amino-acid polypeptide reads, in one-letter code: Peptidyl-tRNA hydrolase (194 aa).

Y17 lines the tRNA pocket. H22 serves as the catalytic Proton acceptor. 3 residues coordinate tRNA: Y68, N70, and N116.

Belongs to the PTH family. In terms of assembly, monomer.

The protein resides in the cytoplasm. It catalyses the reaction an N-acyl-L-alpha-aminoacyl-tRNA + H2O = an N-acyl-L-amino acid + a tRNA + H(+). Its function is as follows. Hydrolyzes ribosome-free peptidyl-tRNAs (with 1 or more amino acids incorporated), which drop off the ribosome during protein synthesis, or as a result of ribosome stalling. Functionally, catalyzes the release of premature peptidyl moieties from peptidyl-tRNA molecules trapped in stalled 50S ribosomal subunits, and thus maintains levels of free tRNAs and 50S ribosomes. This Pseudomonas syringae pv. syringae (strain B728a) protein is Peptidyl-tRNA hydrolase.